A 753-amino-acid chain; its full sequence is Replication restart protein PriA (753 aa).

The region spanning 228–395 (SLITTKFQTC…LSKKYTLSVL (168 aa)) is the Helicase ATP-binding domain. 241 to 248 (GVTGSGKT) serves as a coordination point for ATP. A DEAH box motif is present at residues 337–340 (DEEH). Residues Cys458, Cys461, Cys467, Cys470, Cys485, Cys488, Cys499, and Cys502 each contribute to the Zn(2+) site. Residues 491–646 (RLSKPITSCP…DFPAFYKEEI (156 aa)) form the Helicase C-terminal domain.

Belongs to the helicase family. PriA subfamily. Component of the replication restart primosome. It depends on Zn(2+) as a cofactor.

The catalysed reaction is Couples ATP hydrolysis with the unwinding of duplex DNA by translocating in the 3'-5' direction.. The enzyme catalyses ATP + H2O = ADP + phosphate + H(+). Functionally, initiates the restart of stalled replication forks, which reloads the replicative helicase on sites other than the origin of replication. Recognizes and binds to abandoned replication forks and remodels them to uncover a helicase loading site. Promotes assembly of the primosome at these replication forks. The sequence is that of Replication restart protein PriA from Chlamydia muridarum (strain MoPn / Nigg).